The chain runs to 291 residues: Lipase (291 aa).

An N-terminal signal peptide occupies residues 1–17 (MRSSLVLFFVSAWTALA). Residues 18-22 (SPIRR) constitute a propeptide that is removed on maturation. 3 disulfides stabilise this stretch: C44/C290, C58/C63, and C126/C129. S168 serves as the catalytic Nucleophile. Active-site charge relay system residues include D223 and H280.

Belongs to the AB hydrolase superfamily. Lipase family.

The catalysed reaction is a triacylglycerol + H2O = a diacylglycerol + a fatty acid + H(+). In Thermomyces lanuginosus (Humicola lanuginosa), this protein is Lipase (LIP).